The primary structure comprises 337 residues: Biotin synthase (337 aa).

Positions 58 to 288 (AGSELLHACS…AHPHKIIKFA (231 aa)) constitute a Radical SAM core domain. [4Fe-4S] cluster contacts are provided by Cys76, Cys80, and Cys83. Residues Cys155, Cys216, and Lys286 each contribute to the [2Fe-2S] cluster site.

Belongs to the radical SAM superfamily. Biotin synthase family. Homodimer. [4Fe-4S] cluster is required as a cofactor. Requires [2Fe-2S] cluster as cofactor.

It carries out the reaction (4R,5S)-dethiobiotin + (sulfur carrier)-SH + 2 reduced [2Fe-2S]-[ferredoxin] + 2 S-adenosyl-L-methionine = (sulfur carrier)-H + biotin + 2 5'-deoxyadenosine + 2 L-methionine + 2 oxidized [2Fe-2S]-[ferredoxin]. The protein operates within cofactor biosynthesis; biotin biosynthesis; biotin from 7,8-diaminononanoate: step 2/2. Its function is as follows. Catalyzes the conversion of dethiobiotin (DTB) to biotin by the insertion of a sulfur atom into dethiobiotin via a radical-based mechanism. The chain is Biotin synthase from Pelodictyon phaeoclathratiforme (strain DSM 5477 / BU-1).